A 24-amino-acid chain; its full sequence is Humanin-like 7 (24 aa).

Belongs to the humanin family. In terms of tissue distribution, expressed in testis.

Its subcellular location is the secreted. The protein resides in the cytoplasm. Functionally, plays a role as a neuroprotective and antiapoptotic factor. This Homo sapiens (Human) protein is Humanin-like 7.